We begin with the raw amino-acid sequence, 375 residues long: AA9 family lytic polysaccharide monooxygenase CEL1 (375 aa).

The signal sequence occupies residues 1–16 (MLFPALALLCPVLVAA). H119 is a binding site for Cu(2+). C130 and C135 form a disulfide bridge. A glycan (N-linked (GlcNAc...) asparagine) is linked at N132. H196 is a binding site for O2. Residue N197 is glycosylated (N-linked (GlcNAc...) asparagine). Y212 serves as a coordination point for Cu(2+). C232 and C237 are disulfide-bonded. The interval 287 to 375 (NGMSSSPSSS…RSRVAHLDRH (89 aa)) is disordered. The span at 290–341 (SSSPSSSSGVSSSSSSSVASSDTSDSTTSSGVVAVNVSAASSPSSSISANSA) shows a compositional bias: low complexity. N325 is a glycosylation site (N-linked (GlcNAc...) asparagine). The segment covering 347–369 (KTCKRKKRSKIAGQKRHIHRSRV) has biased composition (basic residues).

This sequence belongs to the polysaccharide monooxygenase AA9 family. The cofactor is Cu(2+).

The protein localises to the secreted. It is found in the cell wall. It catalyses the reaction [(1-&gt;4)-beta-D-glucosyl]n+m + reduced acceptor + O2 = 4-dehydro-beta-D-glucosyl-[(1-&gt;4)-beta-D-glucosyl]n-1 + [(1-&gt;4)-beta-D-glucosyl]m + acceptor + H2O.. In terms of biological role, lytic polysaccharide monooxygenase (LPMO) that depolymerizes polysaccharides via the oxidation of scissile alpha- or beta-(1-4)-glycosidic bonds, yielding C4 oxidation products. Catalysis by LPMOs requires the reduction of the active-site copper from Cu(II) to Cu(I) by a reducing agent and H(2)O(2) or O(2) as a cosubstrate. Required for the expression of stress response phenotypes, including thermotolerance, cell wall integrity, and efficient cell cycle progression. Promotes intrinsic fungal cell wall remodeling events required for efficient adaptation to the host environment. Required for virulence in a murine inhalational model of cryptococcal infection as well as in Galleria mellonella larvae. The protein is AA9 family lytic polysaccharide monooxygenase CEL1 of Cryptococcus neoformans var. grubii serotype A (strain H99 / ATCC 208821 / CBS 10515 / FGSC 9487) (Filobasidiella neoformans var. grubii).